A 516-amino-acid polypeptide reads, in one-letter code: Probable serine/threonine-protein kinase DDB_G0293276 (516 aa).

The segment at 69–115 (SIEIDDENPYNTNNNNNSNNNNNNNNNNCNNSNNSNNNKNINSLDNI) is disordered. Over residues 79–115 (NTNNNNNSNNNNNNNNNNCNNSNNSNNNKNINSLDNI) the composition is skewed to low complexity. One can recognise a Protein kinase domain in the interval 232 to 479 (YKHVECIGKG…SKDIKNHPYF (248 aa)). Residues 238 to 246 (IGKGGYGVV) and Lys-261 each bind ATP. The active-site Proton acceptor is Asp-350.

It belongs to the protein kinase superfamily. AGC Ser/Thr protein kinase family.

The enzyme catalyses L-seryl-[protein] + ATP = O-phospho-L-seryl-[protein] + ADP + H(+). It carries out the reaction L-threonyl-[protein] + ATP = O-phospho-L-threonyl-[protein] + ADP + H(+). The sequence is that of Probable serine/threonine-protein kinase DDB_G0293276 from Dictyostelium discoideum (Social amoeba).